Consider the following 841-residue polypeptide: Homeobox-leucine zipper protein ATHB-9 (841 aa).

The segment covering 1-18 has biased composition (basic and acidic residues); that stretch reads MMAHHSMDDRDSPDKGFD. The tract at residues 1–21 is disordered; the sequence is MMAHHSMDDRDSPDKGFDSGK. Positions 18-81 form a DNA-binding region, homeobox; the sequence is DSGKYVRYTP…NRRCREKQRK (64 aa). Positions 85 to 118 form a coiled coil; sequence RLQTVNRKLSAMNKLLMEENDRLQKQVSNLVYEN. 2 disordered regions span residues 140 to 162 and 602 to 630; these read VVVS…RDVN and DQKT…TKTD. Low complexity predominate over residues 145–155; the sequence is QQRQQQNPTHQ. The region spanning 160–388 is the START domain; the sequence is DVNNPANLLS…IAQETSGEVQ (229 aa). The segment covering 603 to 614 has biased composition (polar residues); the sequence is QKTNPNDHQSAS.

Belongs to the HD-ZIP homeobox family. Class III subfamily. In terms of assembly, binds DNA as homodimer. Interacts with ESR1 and ESR2. Interacts with ZPR3.

The protein localises to the nucleus. Functionally, probable transcription factor involved in the determination of adaxial-abaxial polarity in ovule primordium. Specifies adaxial leaf fates. Binds to the DNA sequence 5'-GTAAT[GC]ATTAC-3'. In Arabidopsis thaliana (Mouse-ear cress), this protein is Homeobox-leucine zipper protein ATHB-9 (ATHB-9).